The following is a 430-amino-acid chain: Adenylosuccinate synthetase (430 aa).

GTP contacts are provided by residues 12–18 (GDEGKGK) and 40–42 (GHT). Asp-13 acts as the Proton acceptor in catalysis. Residues Asp-13 and Gly-40 each coordinate Mg(2+). Residues 13–16 (DEGK), 38–41 (NAGH), Thr-128, Arg-142, Gln-223, Thr-238, and Arg-302 each bind IMP. The active-site Proton donor is the His-41. 298 to 304 (TTTGRPR) lines the substrate pocket. Residues Arg-304, 330 to 332 (SID), and 412 to 414 (SVG) each bind GTP.

This sequence belongs to the adenylosuccinate synthetase family. As to quaternary structure, homodimer. It depends on Mg(2+) as a cofactor.

The protein localises to the cytoplasm. It catalyses the reaction IMP + L-aspartate + GTP = N(6)-(1,2-dicarboxyethyl)-AMP + GDP + phosphate + 2 H(+). The protein operates within purine metabolism; AMP biosynthesis via de novo pathway; AMP from IMP: step 1/2. Plays an important role in the de novo pathway of purine nucleotide biosynthesis. Catalyzes the first committed step in the biosynthesis of AMP from IMP. In Streptococcus agalactiae serotype III (strain NEM316), this protein is Adenylosuccinate synthetase.